The chain runs to 23 residues: Brevinin-1Eb (23 aa).

A disulfide bridge connects residues Cys17 and Cys23.

Belongs to the frog skin active peptide (FSAP) family. Brevinin subfamily. As to expression, expressed by the skin glands.

Its subcellular location is the secreted. Its function is as follows. Shows antibacterial activity against representative Gram-negative and Gram-positive bacterial species, and a very high hemolytic activity. In Pelophylax lessonae (Pool frog), this protein is Brevinin-1Eb.